The chain runs to 89 residues: Small ribosomal subunit protein uS14 (89 aa).

This sequence belongs to the universal ribosomal protein uS14 family. As to quaternary structure, part of the 30S ribosomal subunit. Contacts proteins S3 and S10.

Functionally, binds 16S rRNA, required for the assembly of 30S particles and may also be responsible for determining the conformation of the 16S rRNA at the A site. The chain is Small ribosomal subunit protein uS14 from Chlorobaculum parvum (strain DSM 263 / NCIMB 8327) (Chlorobium vibrioforme subsp. thiosulfatophilum).